The following is a 280-amino-acid chain: Pantothenate synthetase (280 aa).

31–38 (MGNLHVGH) contacts ATP. Residue H38 is the Proton donor of the active site. Q62 is a (R)-pantoate binding site. Q62 lines the beta-alanine pocket. ATP is bound at residue 150–153 (GKKD). Q156 contacts (R)-pantoate. ATP-binding positions include V179 and 187 to 190 (MSSR).

This sequence belongs to the pantothenate synthetase family. As to quaternary structure, homodimer.

The protein localises to the cytoplasm. The enzyme catalyses (R)-pantoate + beta-alanine + ATP = (R)-pantothenate + AMP + diphosphate + H(+). It functions in the pathway cofactor biosynthesis; (R)-pantothenate biosynthesis; (R)-pantothenate from (R)-pantoate and beta-alanine: step 1/1. Its function is as follows. Catalyzes the condensation of pantoate with beta-alanine in an ATP-dependent reaction via a pantoyl-adenylate intermediate. The sequence is that of Pantothenate synthetase from Xanthomonas oryzae pv. oryzae (strain MAFF 311018).